The primary structure comprises 146 residues: 3-dehydroquinate dehydratase (146 aa).

Y22 acts as the Proton acceptor in catalysis. N73, H79, and D86 together coordinate substrate. H99 acts as the Proton donor in catalysis. Residues V100–S101 and R110 contribute to the substrate site.

Belongs to the type-II 3-dehydroquinase family. Homododecamer.

It catalyses the reaction 3-dehydroquinate = 3-dehydroshikimate + H2O. The protein operates within metabolic intermediate biosynthesis; chorismate biosynthesis; chorismate from D-erythrose 4-phosphate and phosphoenolpyruvate: step 3/7. Functionally, catalyzes a trans-dehydration via an enolate intermediate. In Kineococcus radiotolerans (strain ATCC BAA-149 / DSM 14245 / SRS30216), this protein is 3-dehydroquinate dehydratase.